We begin with the raw amino-acid sequence, 302 residues long: Oxygen-dependent coproporphyrinogen-III oxidase (302 aa).

Ser94 contacts substrate. 2 residues coordinate a divalent metal cation: His98 and His108. His108 serves as the catalytic Proton donor. 110–112 (NVR) serves as a coordination point for substrate. The a divalent metal cation site is built by His147 and His177. Residues 242–277 (YVEFNLVWDRGTLFGLQSGGRTESILMSMPPLVRWE) form an important for dimerization region. A substrate-binding site is contributed by 260–262 (GGR).

The protein belongs to the aerobic coproporphyrinogen-III oxidase family. As to quaternary structure, homodimer. It depends on a divalent metal cation as a cofactor.

It localises to the cytoplasm. It carries out the reaction coproporphyrinogen III + O2 + 2 H(+) = protoporphyrinogen IX + 2 CO2 + 2 H2O. The protein operates within porphyrin-containing compound metabolism; protoporphyrin-IX biosynthesis; protoporphyrinogen-IX from coproporphyrinogen-III (O2 route): step 1/1. In terms of biological role, involved in the heme biosynthesis. Catalyzes the aerobic oxidative decarboxylation of propionate groups of rings A and B of coproporphyrinogen-III to yield the vinyl groups in protoporphyrinogen-IX. The protein is Oxygen-dependent coproporphyrinogen-III oxidase of Chromobacterium violaceum (strain ATCC 12472 / DSM 30191 / JCM 1249 / CCUG 213 / NBRC 12614 / NCIMB 9131 / NCTC 9757 / MK).